The chain runs to 350 residues: Bifunctional UDP-glucose 4-epimerase and UDP-xylose 4-epimerase 1 (350 aa).

NAD(+) contacts are provided by residues 15 to 17, 36 to 40, 67 to 68, Phe-89, and Lys-93; these read GFI, DNFDN, and DL. Residue Ser-133 participates in substrate binding. The active-site Proton acceptor is Tyr-157. Residues Lys-161 and Tyr-185 each coordinate NAD(+).

This sequence belongs to the NAD(P)-dependent epimerase/dehydratase family. Requires NAD(+) as cofactor.

The catalysed reaction is UDP-alpha-D-glucose = UDP-alpha-D-galactose. The enzyme catalyses UDP-beta-L-arabinopyranose = UDP-alpha-D-xylose. It participates in carbohydrate metabolism; galactose metabolism. It functions in the pathway nucleotide-sugar biosynthesis; UDP-L-arabinose biosynthesis; UDP-L-arabinose from UDP-alpha-D-xylose: step 1/1. The protein operates within cell wall biogenesis; cell wall polysaccharide biosynthesis. Its activity is regulated as follows. Inhibited by Hg(2+). In terms of biological role, catalyzes the interconversion between UDP-glucose and UDP-galactose and the interconversion between UDP-arabinose and UDP-xylose. The chain is Bifunctional UDP-glucose 4-epimerase and UDP-xylose 4-epimerase 1 from Pisum sativum (Garden pea).